The primary structure comprises 215 residues: Transmembrane protein 267 (215 aa).

3 consecutive transmembrane segments (helical) span residues 77-97, 114-134, and 178-198; these read FGEV…HFFQ, FLHC…AVHL, and SSFY…LMYL.

Its subcellular location is the membrane. In Mus musculus (Mouse), this protein is Transmembrane protein 267.